A 377-amino-acid polypeptide reads, in one-letter code: Probable pectin lyase D (377 aa).

The first 17 residues, 1 to 17 (MRVSAFALLAAAATAAA), serve as a signal peptide directing secretion. 2 disulfides stabilise this stretch: Cys80–Cys99 and Cys89–Cys223. Residue Asn126 is glycosylated (N-linked (GlcNAc...) asparagine). Residue Arg253 is part of the active site. Cysteines 321 and 329 form a disulfide.

It belongs to the polysaccharide lyase 1 family.

It localises to the secreted. The catalysed reaction is Eliminative cleavage of (1-&gt;4)-alpha-D-galacturonan methyl ester to give oligosaccharides with 4-deoxy-6-O-methyl-alpha-D-galact-4-enuronosyl groups at their non-reducing ends.. Pectinolytic enzymes consist of four classes of enzymes: pectin lyase, polygalacturonase, pectin methylesterase and rhamnogalacturonase. Among pectinolytic enzymes, pectin lyase is the most important in depolymerization of pectin, since it cleaves internal glycosidic bonds of highly methylated pectins. The chain is Probable pectin lyase D (pelD) from Emericella nidulans (strain FGSC A4 / ATCC 38163 / CBS 112.46 / NRRL 194 / M139) (Aspergillus nidulans).